We begin with the raw amino-acid sequence, 308 residues long: Glutaminase (308 aa).

Substrate contacts are provided by S66, N117, E161, N168, Y192, Y244, and V262.

It belongs to the glutaminase family. Homotetramer.

It catalyses the reaction L-glutamine + H2O = L-glutamate + NH4(+). This chain is Glutaminase, found in Photorhabdus laumondii subsp. laumondii (strain DSM 15139 / CIP 105565 / TT01) (Photorhabdus luminescens subsp. laumondii).